We begin with the raw amino-acid sequence, 207 residues long: ATP-dependent Clp protease proteolytic subunit (207 aa).

Ser111 serves as the catalytic Nucleophile. His136 is a catalytic residue.

This sequence belongs to the peptidase S14 family. Fourteen ClpP subunits assemble into 2 heptameric rings which stack back to back to give a disk-like structure with a central cavity, resembling the structure of eukaryotic proteasomes.

Its subcellular location is the cytoplasm. The catalysed reaction is Hydrolysis of proteins to small peptides in the presence of ATP and magnesium. alpha-casein is the usual test substrate. In the absence of ATP, only oligopeptides shorter than five residues are hydrolyzed (such as succinyl-Leu-Tyr-|-NHMec, and Leu-Tyr-Leu-|-Tyr-Trp, in which cleavage of the -Tyr-|-Leu- and -Tyr-|-Trp bonds also occurs).. Cleaves peptides in various proteins in a process that requires ATP hydrolysis. Has a chymotrypsin-like activity. Plays a major role in the degradation of misfolded proteins. This Aeromonas salmonicida (strain A449) protein is ATP-dependent Clp protease proteolytic subunit.